The chain runs to 109 residues: Fluoride-specific ion channel FluC 1 (109 aa).

Helical transmembrane passes span 1–21 (MVIV…YFFS), 29–49 (LPLG…VFYN), 55–75 (EVYA…STLN), and 87–107 (VFYS…FLGI). Gly-66 and Thr-69 together coordinate Na(+).

It belongs to the fluoride channel Fluc/FEX (TC 1.A.43) family.

Its subcellular location is the cell membrane. The enzyme catalyses fluoride(in) = fluoride(out). Its activity is regulated as follows. Na(+) is not transported, but it plays an essential structural role and its presence is essential for fluoride channel function. Functionally, fluoride-specific ion channel. Important for reducing fluoride concentration in the cell, thus reducing its toxicity. This Streptococcus pneumoniae (strain ATCC BAA-255 / R6) protein is Fluoride-specific ion channel FluC 1.